A 316-amino-acid chain; its full sequence is Delta(1)-pyrroline-2-carboxylate reductase (316 aa).

The protein belongs to the ornithine cyclodeaminase/mu-crystallin family.

The catalysed reaction is L-proline + NAD(+) = 1-pyrroline-2-carboxylate + NADH + H(+). It catalyses the reaction L-proline + NADP(+) = 1-pyrroline-2-carboxylate + NADPH + H(+). In terms of biological role, catalyzes the reduction of Delta(1)-pyrroline-2-carboxylate (Pyr2C) to L-proline, using preferentially NADPH over NADH as the electron donor. Is likely involved in a degradation pathway that converts trans-3-hydroxy-L-proline (t3LHyp) to L-proline, which would allow P.denitrificans to grow on t3LHyp as a sole carbon source. The chain is Delta(1)-pyrroline-2-carboxylate reductase from Paracoccus denitrificans (strain Pd 1222).